Reading from the N-terminus, the 413-residue chain is Sprouty-related, EVH1 domain-containing protein 2 (413 aa).

Residues 5 to 122 enclose the WH1 domain; that stretch reads THPNDDSYIV…RGVRKALEDL (118 aa). The disordered stretch occupies residues 122 to 163; that stretch reads LTEGSTTSSSTLQNEAELGDDDVFTTATDSSSNSSQKKDHST. The region spanning 195-248 is the KBD domain; sequence FSRNLFPFEDEEIVRINPRERWMITGYEDYRYAAVPDKFIQPEDSDSYVQISKN. The region spanning 303 to 411 is the SPR domain; sequence RCVYCRDMFN…CGCCGGKHKA (109 aa).

The protein resides in the cell membrane. The protein localises to the cytoplasmic vesicle. Its subcellular location is the secretory vesicle membrane. It localises to the cytoplasm. In terms of biological role, negatively regulates Ras signaling pathways and downstream activation of MAP kinases. This Danio rerio (Zebrafish) protein is Sprouty-related, EVH1 domain-containing protein 2 (spred2).